A 315-amino-acid polypeptide reads, in one-letter code: Type II restriction enzyme AvaI (315 aa).

The catalysed reaction is Endonucleolytic cleavage of DNA to give specific double-stranded fragments with terminal 5'-phosphates.. In terms of biological role, a P subtype restriction enzyme that recognizes the double-stranded sequence 5'-CYCGRG-3' and cleaves after C-1. This chain is Type II restriction enzyme AvaI, found in Anabaena variabilis.